Reading from the N-terminus, the 207-residue chain is Keratin-associated protein 27-1 (207 aa).

Positions 184–207 are disordered; that stretch reads QLLESSPGVEPTCCVTGGSQLPSK.

The protein belongs to the PMG family. As to quaternary structure, interacts with hair keratins.

In the hair cortex, hair keratin intermediate filaments are embedded in an interfilamentous matrix, consisting of hair keratin-associated proteins (KRTAP), which are essential for the formation of a rigid and resistant hair shaft through their extensive disulfide bond cross-linking with abundant cysteine residues of hair keratins. The matrix proteins include the high-sulfur and high-glycine-tyrosine keratins. The chain is Keratin-associated protein 27-1 (KRTAP27-1) from Homo sapiens (Human).